The chain runs to 268 residues: 4-hydroxy-tetrahydrodipicolinate reductase (268 aa).

NAD(+)-binding positions include 10–15 (GSTGRM), Glu36, 99–101 (GTT), and 123–126 (APNM). Catalysis depends on His156, which acts as the Proton donor/acceptor. (S)-2,3,4,5-tetrahydrodipicolinate is bound at residue His157. The active-site Proton donor is Lys160. (S)-2,3,4,5-tetrahydrodipicolinate is bound at residue 166–167 (GT).

The protein belongs to the DapB family.

It localises to the cytoplasm. The enzyme catalyses (S)-2,3,4,5-tetrahydrodipicolinate + NAD(+) + H2O = (2S,4S)-4-hydroxy-2,3,4,5-tetrahydrodipicolinate + NADH + H(+). It carries out the reaction (S)-2,3,4,5-tetrahydrodipicolinate + NADP(+) + H2O = (2S,4S)-4-hydroxy-2,3,4,5-tetrahydrodipicolinate + NADPH + H(+). The protein operates within amino-acid biosynthesis; L-lysine biosynthesis via DAP pathway; (S)-tetrahydrodipicolinate from L-aspartate: step 4/4. In terms of biological role, catalyzes the conversion of 4-hydroxy-tetrahydrodipicolinate (HTPA) to tetrahydrodipicolinate. The protein is 4-hydroxy-tetrahydrodipicolinate reductase of Nitrosomonas europaea (strain ATCC 19718 / CIP 103999 / KCTC 2705 / NBRC 14298).